We begin with the raw amino-acid sequence, 221 residues long: Iron-sulfur cluster repair protein YtfE (221 aa).

Belongs to the RIC family. YtfE subfamily. As to quaternary structure, homodimer.

Its subcellular location is the cytoplasm. Functionally, di-iron-containing protein involved in the repair of iron-sulfur clusters damaged by oxidative and nitrosative stress conditions. In Yersinia pseudotuberculosis serotype O:1b (strain IP 31758), this protein is Iron-sulfur cluster repair protein YtfE.